The following is a 103-amino-acid chain: Large ribosomal subunit protein uL24 (103 aa).

Belongs to the universal ribosomal protein uL24 family. Part of the 50S ribosomal subunit.

Functionally, one of two assembly initiator proteins, it binds directly to the 5'-end of the 23S rRNA, where it nucleates assembly of the 50S subunit. Its function is as follows. One of the proteins that surrounds the polypeptide exit tunnel on the outside of the subunit. The polypeptide is Large ribosomal subunit protein uL24 (Dehalococcoides mccartyi (strain ATCC BAA-2266 / KCTC 15142 / 195) (Dehalococcoides ethenogenes (strain 195))).